The sequence spans 147 residues: UPF0306 protein YhbP (147 aa).

This sequence belongs to the UPF0306 family.

This chain is UPF0306 protein YhbP, found in Escherichia coli O1:K1 / APEC.